Here is a 742-residue protein sequence, read N- to C-terminus: ATP-dependent RNA helicase DBP7 (742 aa).

The tract at residues 45–100 (GKTVSRKRKANTTGDEGIIPGRGENSIKKLHKESSYSSEEQEKYKGRNAHNTQGRT) is disordered. A Q motif motif is present at residues 143–172 (DQFASLGVSSLLVSHLEQKMRIKKPTSIQK). Positions 178–372 (IIGNAGKNDF…NVALKDYKLI (195 aa)) constitute a Helicase ATP-binding domain. 191 to 198 (AQTGSGKT) serves as a coordination point for ATP. Positions 307–310 (DEGD) match the DEGD box motif. The Helicase C-terminal domain occupies 405–605 (TLAATLNNIT…ILMPAFKDVN (201 aa)). The disordered stretch occupies residues 701 to 726 (AMGLQSSKDGNSEKKPTKENSKNKMF). Residues 710-722 (GNSEKKPTKENSK) are compositionally biased toward basic and acidic residues.

Belongs to the DEAD box helicase family. DDX31/DBP7 subfamily.

It is found in the nucleus. It localises to the nucleolus. It carries out the reaction ATP + H2O = ADP + phosphate + H(+). ATP-binding RNA helicase involved in the biogenesis of 60S ribosomal subunits and is required for the normal formation of 25S and 5.8S rRNAs. The chain is ATP-dependent RNA helicase DBP7 (DBP7) from Saccharomyces cerevisiae (strain ATCC 204508 / S288c) (Baker's yeast).